A 966-amino-acid polypeptide reads, in one-letter code: Mitogen-activated protein kinase kinase kinase 13 (966 aa).

Disordered regions lie at residues 1 to 22 (MANF…SESK) and 93 to 112 (SEMA…STSG). Positions 96-112 (AVSQGNSNTVDAESTSG) are enriched in polar residues. A Protein kinase domain is found at 168-409 (ISELQWLGSG…FRQTLMHLDI (242 aa)). Residues 174–182 (LGSGAQGAV) and Lys195 each bind ATP. The Proton acceptor role is filled by Asp279. Leucine-zipper regions lie at residues 433–454 (VKKH…DEEL) and 486–507 (LSAI…EQAV). Disordered stretches follow at residues 534-652 (KRKG…SQSH), 744-834 (DIPS…RRQR), 846-873 (STFS…PDEL), and 887-906 (DLLS…SDGL). The segment covering 567–581 (SPLSGSPKMSTSSSK) has biased composition (low complexity). Over residues 582-594 (SRYRSKPRHRRGN) the composition is skewed to basic residues. 2 stretches are compositionally biased toward polar residues: residues 609 to 629 (QPAQ…SQYP) and 781 to 795 (FSSC…TSHL). Over residues 814-827 (DSSEEEEGEVDSEV) the composition is skewed to acidic residues. The segment at 815–828 (SSEEEEGEVDSEVE) is acidic. Residues 846–855 (STFSSENFSV) show a composition bias toward polar residues.

The protein belongs to the protein kinase superfamily. STE Ser/Thr protein kinase family. MAP kinase kinase kinase subfamily. In terms of assembly, homodimer; forms dimers through the leucine-zipper motif. Interacts with the C-terminus of MAPK8IP1 through the kinase catalytic domain. Binds PRDX3. Associates with the IKK complex through the kinase domain. It depends on Mg(2+) as a cofactor. Autophosphorylated on serine and threonine residues.

It is found in the cytoplasm. It localises to the membrane. It catalyses the reaction L-seryl-[protein] + ATP = O-phospho-L-seryl-[protein] + ADP + H(+). The enzyme catalyses L-threonyl-[protein] + ATP = O-phospho-L-threonyl-[protein] + ADP + H(+). Its activity is regulated as follows. Activated by autophosphorylation and homodimerization. In terms of biological role, activates the JUN N-terminal pathway through activation of the MAP kinase kinase MAP2K7. Acts synergistically with PRDX3 to regulate the activation of NF-kappa-B in the cytosol. This activation is kinase-dependent and involves activating the IKK complex, the IKBKB-containing complex that phosphorylates inhibitors of NF-kappa-B. The protein is Mitogen-activated protein kinase kinase kinase 13 of Pongo abelii (Sumatran orangutan).